We begin with the raw amino-acid sequence, 365 residues long: Cytoplasmic tRNA 2-thiolation protein 1 (365 aa).

This sequence belongs to the TtcA family. CTU1/NCS6/ATPBD3 subfamily.

It is found in the cytoplasm. It functions in the pathway tRNA modification; 5-methoxycarbonylmethyl-2-thiouridine-tRNA biosynthesis. Functionally, plays a central role in 2-thiolation of mcm(5)S(2)U at tRNA wobble positions of tRNA(Lys), tRNA(Glu) and tRNA(Gln). Directly binds tRNAs and probably acts by catalyzing adenylation of tRNAs, an intermediate required for 2-thiolation. It is unclear whether it acts as a sulfurtransferase that transfers sulfur from thiocarboxylated URM1 onto the uridine of tRNAs at wobble position. Prior mcm(5) tRNA modification by the elongator complex is required for 2-thiolation. May also be involved in protein urmylation. The sequence is that of Cytoplasmic tRNA 2-thiolation protein 1 from Yarrowia lipolytica (strain CLIB 122 / E 150) (Yeast).